A 461-amino-acid chain; its full sequence is Lysosomal proton-coupled steroid conjugate and bile acid symporter SLC46A3 (461 aa).

The first 25 residues, 1–25 (MKIPFVEPVICLSVFAVTLNSPLTT), serve as a signal peptide directing secretion. Residues 26 to 70 (QYVYRRIWEETGNYSIALESNTSECAKNKSSPIFAFQEEVQKKVS) lie on the Extracellular side of the membrane. N-linked (GlcNAc...) asparagine glycosylation is found at Asn38, Asn46, and Asn53. A helical membrane pass occupies residues 71–91 (LFNLEMDISGLIPGLVSTFVF). Topologically, residues 92–101 (LSHSDHGGRK) are cytoplasmic. The helical transmembrane segment at 102 to 124 (FPLILSSVGALANSAWLCLLSYF) threads the bilayer. At 125–133 (ALPIQLLIA) the chain is on the extracellular side. A helical membrane pass occupies residues 134–156 (STFIGALFGNYTTFLGASFAYIV). Topologically, residues 157-170 (DQCKEKKQRTIRIA) are cytoplasmic. Residues 171 to 191 (IIDFLFGVVSGLTGLSSGYFI) traverse the membrane as a helical segment. Residues 192–195 (RGLG) lie on the Extracellular side of the membrane. Residues 196–216 (FVWSFLIVTVALFVNLIYILL) traverse the membrane as a helical segment. Residues 217–261 (FLEDSMKESSSQNISVSWTETFKNLFHRTYMLFKNASGEQQSLCC) lie on the Cytoplasmic side of the membrane. The helical transmembrane segment at 262–282 (LLLFTMITYFFVTIGVSPIFV) threads the bilayer. Residues 283 to 294 (LYELDSPLCWDE) lie on the Extracellular side of the membrane. Residues 295–315 (VLIGYGSALGSVTFFSSFLGI) form a helical membrane-spanning segment. The Cytoplasmic segment spans residues 316–324 (WLFSYCMED). The helical transmembrane segment at 325–345 (IHMAFIGTFTTMVGMAMTAFA) threads the bilayer. At 346–347 (RT) the chain is on the extracellular side. The helical transmembrane segment at 348 to 368 (TLMMFLVRLPFLFTVMPLSVL) threads the bilayer. Residues 369–382 (RSMISKVVHSTEQG) are Cytoplasmic-facing. The helical transmembrane segment at 383 to 403 (TMFACLAFLETLGGITAVSTF) threads the bilayer. Over 404-415 (NGIYSATVAWCK) the chain is Extracellular. Residues 416–436 (GFVFLLSAVLLLIPAISLCVI) traverse the membrane as a helical segment. Over 437–461 (KYVSRNTGSYVLLIQEESSEDTSDR) the chain is Cytoplasmic. The Tyrosine-based lysosomal-sorting motif motif lies at 446–449 (YVLL).

Belongs to the major facilitator superfamily. SLC46A family.

It is found in the lysosome membrane. The catalysed reaction is estrone 3-sulfate(out) + n H(+)(out) = estrone 3-sulfate(in) + n H(+)(in). It catalyses the reaction 25-hydroxyvitamin D3 sulfate(out) + n H(+)(out) = 25-hydroxyvitamin D3 sulfate(in) + n H(+)(in). The enzyme catalyses cholate(out) + n H(+)(out) = cholate(in) + n H(+)(in). It carries out the reaction glycocholate(out) + n H(+)(out) = glycocholate(in) + n H(+)(in). The catalysed reaction is taurocholate(out) + n H(+)(out) = taurocholate(in) + n H(+)(in). It catalyses the reaction dehydroepiandrosterone 3-sulfate(out) + n H(+)(out) = dehydroepiandrosterone 3-sulfate(in) + n H(+)(in). The enzyme catalyses N-acetyl-D-muramoyl-L-alanyl-D-isoglutamine(out) + n H(+)(out) = N-acetyl-D-muramoyl-L-alanyl-D-isoglutamine(in) + n H(+)(in). It carries out the reaction 2',3'-cGAMP(out) + n H(+)(out) = 2',3'-cGAMP(in) + n H(+)(in). Functionally, lysosomal proton-coupled steroid conjugate and bile acid transporter. Preferentially recognizes lipophilic steroid conjugates or bile acis as endogenous substrates and seems to mediate escape from lysosomes to the cytoplasm. Modulates hepatic cytosolic copper homeostasis, maybe acting as a lysosomal copper transporter and sequestering copper ions in the lysosome. Delivers pathogen-associated molecular patterns to cytosolic pattern recognition receptors as part of the innate immune response to microbes. Selectively transports bacterial muramyl dipeptide (MDP) into the cytosol for recognition by NOD2, triggering inflammatory responses. Likely acts as a redundant importer of cyclic GMP-AMP dinucleotides (cGAMPs) in monocyte and macrophage cell lineages. The transport mechanism, its electrogenicity and stoichiometry remain to be elucidated. The sequence is that of Lysosomal proton-coupled steroid conjugate and bile acid symporter SLC46A3 (SLC46A3) from Bos taurus (Bovine).